A 663-amino-acid chain; its full sequence is DNA topoisomerase 4 subunit B (663 aa).

ATP-binding positions include Y7, N47, D74, 114 to 120 (GLHGVGA), and K341. Residues 386–418 (REAARKAREDARSGKKNKRKDTLLSGKLTPAQS) form a disordered region. Residues 387-398 (EAARKAREDARS) are compositionally biased toward basic and acidic residues. The Toprim domain maps to 424–538 (NELYLVEGDS…AGRVFIALPP (115 aa)). Mg(2+) contacts are provided by E430, D503, and D505.

It belongs to the type II topoisomerase family. ParE type 2 subfamily. As to quaternary structure, heterotetramer composed of ParC and ParE. Mg(2+) is required as a cofactor. Requires Mn(2+) as cofactor. The cofactor is Ca(2+).

The enzyme catalyses ATP-dependent breakage, passage and rejoining of double-stranded DNA.. Topoisomerase IV is essential for chromosome segregation. It relaxes supercoiled DNA. Performs the decatenation events required during the replication of a circular DNA molecule. The protein is DNA topoisomerase 4 subunit B of Staphylococcus aureus (strain MRSA252).